The following is a 334-amino-acid chain: Protein-methionine-sulfoxide reductase catalytic subunit MsrP (334 aa).

The tat-type signal signal peptide spans 1 to 44 (MKKNQFLKESDVTAESVFFMKRRQVLKALGISAAALSLPHAAHA). Mo-molybdopterin-binding positions include asparagine 88, 91-92 (YE), cysteine 146, threonine 181, asparagine 233, arginine 238, and 249-251 (GIK).

It belongs to the MsrP family. Heterodimer of a catalytic subunit (MsrP) and a heme-binding subunit (MsrQ). Mo-molybdopterin is required as a cofactor. Post-translationally, predicted to be exported by the Tat system. The position of the signal peptide cleavage has not been experimentally proven.

It localises to the periplasm. It catalyses the reaction L-methionyl-[protein] + a quinone + H2O = L-methionyl-(S)-S-oxide-[protein] + a quinol. The catalysed reaction is L-methionyl-[protein] + a quinone + H2O = L-methionyl-(R)-S-oxide-[protein] + a quinol. Functionally, part of the MsrPQ system that repairs oxidized periplasmic proteins containing methionine sulfoxide residues (Met-O), using respiratory chain electrons. Thus protects these proteins from oxidative-stress damage caused by reactive species of oxygen and chlorine generated by the host defense mechanisms. MsrPQ is essential for the maintenance of envelope integrity under bleach stress, rescuing a wide series of structurally unrelated periplasmic proteins from methionine oxidation, including the primary periplasmic chaperone SurA and the lipoprotein Pal. The catalytic subunit MsrP is non-stereospecific, being able to reduce both (R-) and (S-) diastereoisomers of methionine sulfoxide. In Escherichia coli O127:H6 (strain E2348/69 / EPEC), this protein is Protein-methionine-sulfoxide reductase catalytic subunit MsrP.